An 871-amino-acid chain; its full sequence is Coatomer subunit gamma-2 (871 aa).

Residues 1-11 show a composition bias toward basic and acidic residues; the sequence is MIKKFDKKDEE. A disordered region spans residues 1–21; it reads MIKKFDKKDEESGSGSNPFQH. HEAT repeat units lie at residues 64 to 101, 283 to 320, 321 to 355, 356 to 392, 395 to 430, and 467 to 504; these read TEAT…ISED, RELA…KHPS, AVTA…GSES, SVDR…KYPR, SVMM…ENPE, and PVPS…QNES. Phosphothreonine is present on T594.

It belongs to the COPG family. Oligomeric complex. Binds to CDC42. Interacts with JAGN1. Interacts with TMED10 (via cytoplasmic domain).

The protein localises to the cytoplasm. The protein resides in the cytosol. It is found in the golgi apparatus membrane. Its subcellular location is the cytoplasmic vesicle. It localises to the COPI-coated vesicle membrane. Its function is as follows. The coatomer is a cytosolic protein complex that binds to dilysine motifs and reversibly associates with Golgi non-clathrin-coated vesicles, which further mediate biosynthetic protein transport from the ER, via the Golgi up to the trans Golgi network. Coatomer complex is required for budding from Golgi membranes, and is essential for the retrograde Golgi-to-ER transport of dilysine-tagged proteins. In mammals, the coatomer can only be recruited by membranes associated to ADP-ribosylation factors (ARFs), which are small GTP-binding proteins; the complex also influences the Golgi structural integrity, as well as the processing, activity, and endocytic recycling of LDL receptors. The chain is Coatomer subunit gamma-2 (COPG2) from Homo sapiens (Human).